A 1712-amino-acid polypeptide reads, in one-letter code: Neurexin-2 (1712 aa).

The N-terminal stretch at 1–28 (MASGSRWRPTPPPLLLLLLLALAARADG) is a signal peptide. The Laminin G-like 1 domain maps to 29–206 (LEFGGGPGQW…LRGATADPLC (178 aa)). Over 29–1636 (LEFGGGPGQW…EVIRESSSTT (1608 aa)) the chain is Extracellular. N60 carries an N-linked (GlcNAc...) asparagine glycan. The 41-residue stretch at 202–242 (ADPLCAPARNPCANGGLCTVLAPGEVGCDCSHTGFGGKFCS) folds into the EGF-like 1 domain. 3 cysteine pairs are disulfide-bonded: C206-C219, C213-C229, and C231-C241. Laminin G-like domains are found at residues 289-486 (VATF…SFRC) and 493-686 (DPVT…APFC). D335 provides a ligand contact to Ca(2+). The N-linked (GlcNAc...) asparagine glycan is linked to N338. Positions 352 and 420 each coordinate Ca(2+). Disulfide bonds link C450/C486, C657/C686, C694/C705, C699/C714, and C716/C726. In terms of domain architecture, EGF-like 2 spans 690 to 727 (TLKQCASAPCRNGGVCREGWNRFICDCIGTGFLGRVCE). Laminin G-like domains lie at 732–904 (VLSY…ITYC) and 918–1093 (DPVT…ERGC). Ca(2+) is bound by residues D779 and L796. N841 carries an N-linked (GlcNAc...) asparagine glycan. R854 provides a ligand contact to Ca(2+). Intrachain disulfides connect C1065–C1093, C1100–C1111, C1105–C1120, and C1122–C1132. In terms of domain architecture, EGF-like 3 spans 1096-1133 (PSTTCTEESCANQGVCLQQWDGFTCDCTMTSYGGPVCN). The region spanning 1137 to 1345 (TTYIFGKGGA…HLRLVGEGPS (209 aa)) is the Laminin G-like 6 domain. D1189 and V1206 together coordinate Ca(2+). An N-linked (GlcNAc...) asparagine glycan is attached at N1236. Residues I1288 and N1290 each coordinate Ca(2+). Positions 1373 to 1392 (ATTTTRRGRSPTLRDSTTQN) are disordered. O-linked (Xyl...) (heparan sulfate) serine glycosylation occurs at S1400. Disordered regions lie at residues 1458–1489 (ATQDTLPPPAARRPPSGGPCQAERDDSDCEEP) and 1525–1626 (TLLS…PGAV). Residues 1637-1657 (GMVVGIVAAAALCILILLYAM) traverse the membrane as a helical segment. The Cytoplasmic portion of the chain corresponds to 1658-1712 (YKYRNRDEGSYQVDQSRNYISNSAQSNGAVVKEKAPAAPKTPSKAKKNKDKEYYV). Residues 1679–1712 (NSAQSNGAVVKEKAPAAPKTPSKAKKNKDKEYYV) are disordered.

The protein belongs to the neurexin family. The laminin G-like domain 1 binds to NXPH1. Interacts with PATJ. Interacts with CBLN1, CBLN2 and, less avidly, with CBLN4. Specific isoforms bind neuroligins NLGN1, NLGN2 and NLGN3. Specific isoforms bind to alpha-dystroglycan. Interacts (via Laminin G-like 1 domain) with IGSF21 (Ig-like 1 domain) in a trans-interaction manner. Interacts with CLSTN3. O-glycosylated; contains heparan sulfate. Heparan sulfate attachment is required for synapse development by mediating interactions with neuroligins. Predominantly expressed in brain.

Its subcellular location is the presynaptic cell membrane. Its function is as follows. Neuronal cell surface protein that may be involved in cell recognition and cell adhesion. May mediate intracellular signaling. In Homo sapiens (Human), this protein is Neurexin-2 (NRXN2).